We begin with the raw amino-acid sequence, 580 residues long: Dihydroxy-acid dehydratase (580 aa).

The tract at residues 1–31 (MPSGSSESPADALRASDSTPDIKPRSRDVTD) is disordered. Over residues 20 to 31 (PDIKPRSRDVTD) the composition is skewed to basic and acidic residues. Cysteine 69 is a binding site for [2Fe-2S] cluster. Aspartate 101 contributes to the Mg(2+) binding site. Cysteine 142 is a [2Fe-2S] cluster binding site. Mg(2+) contacts are provided by aspartate 143 and lysine 144. Lysine 144 bears the N6-carboxylysine mark. Residue cysteine 219 coordinates [2Fe-2S] cluster. A Mg(2+)-binding site is contributed by glutamate 470. Serine 496 functions as the Proton acceptor in the catalytic mechanism.

Belongs to the IlvD/Edd family. In terms of assembly, homodimer. [2Fe-2S] cluster is required as a cofactor. Requires Mg(2+) as cofactor.

It carries out the reaction (2R)-2,3-dihydroxy-3-methylbutanoate = 3-methyl-2-oxobutanoate + H2O. The catalysed reaction is (2R,3R)-2,3-dihydroxy-3-methylpentanoate = (S)-3-methyl-2-oxopentanoate + H2O. It functions in the pathway amino-acid biosynthesis; L-isoleucine biosynthesis; L-isoleucine from 2-oxobutanoate: step 3/4. The protein operates within amino-acid biosynthesis; L-valine biosynthesis; L-valine from pyruvate: step 3/4. Its function is as follows. Functions in the biosynthesis of branched-chain amino acids. Catalyzes the dehydration of (2R,3R)-2,3-dihydroxy-3-methylpentanoate (2,3-dihydroxy-3-methylvalerate) into 2-oxo-3-methylpentanoate (2-oxo-3-methylvalerate) and of (2R)-2,3-dihydroxy-3-methylbutanoate (2,3-dihydroxyisovalerate) into 2-oxo-3-methylbutanoate (2-oxoisovalerate), the penultimate precursor to L-isoleucine and L-valine, respectively. The protein is Dihydroxy-acid dehydratase of Mycobacterium sp. (strain JLS).